Here is a 267-residue protein sequence, read N- to C-terminus: Imidazole glycerol phosphate synthase subunit HisF (267 aa).

Catalysis depends on residues D22 and D141.

The protein belongs to the HisA/HisF family. Heterodimer of HisH and HisF.

The protein localises to the cytoplasm. The enzyme catalyses 5-[(5-phospho-1-deoxy-D-ribulos-1-ylimino)methylamino]-1-(5-phospho-beta-D-ribosyl)imidazole-4-carboxamide + L-glutamine = D-erythro-1-(imidazol-4-yl)glycerol 3-phosphate + 5-amino-1-(5-phospho-beta-D-ribosyl)imidazole-4-carboxamide + L-glutamate + H(+). Its pathway is amino-acid biosynthesis; L-histidine biosynthesis; L-histidine from 5-phospho-alpha-D-ribose 1-diphosphate: step 5/9. IGPS catalyzes the conversion of PRFAR and glutamine to IGP, AICAR and glutamate. The HisF subunit catalyzes the cyclization activity that produces IGP and AICAR from PRFAR using the ammonia provided by the HisH subunit. The protein is Imidazole glycerol phosphate synthase subunit HisF of Mycobacterium bovis (strain ATCC BAA-935 / AF2122/97).